A 256-amino-acid polypeptide reads, in one-letter code: Ribonuclease HII (256 aa).

In terms of domain architecture, RNase H type-2 spans 72-256 (QYVAGIDEVG…TFRPVPDYVN (185 aa)). Asp-78, Glu-79, and Asp-170 together coordinate a divalent metal cation.

Belongs to the RNase HII family. Mn(2+) is required as a cofactor. It depends on Mg(2+) as a cofactor.

The protein localises to the cytoplasm. The catalysed reaction is Endonucleolytic cleavage to 5'-phosphomonoester.. Its function is as follows. Endonuclease that specifically degrades the RNA of RNA-DNA hybrids. This is Ribonuclease HII from Limosilactobacillus fermentum (strain NBRC 3956 / LMG 18251) (Lactobacillus fermentum).